We begin with the raw amino-acid sequence, 169 residues long: Peptidyl-prolyl cis-trans isomerase (169 aa).

The 164-residue stretch at 5 to 168 (FFDMTIGGQP…SEVKIAKCGQ (164 aa)) folds into the PPIase cyclophilin-type domain.

This sequence belongs to the cyclophilin-type PPIase family.

The protein localises to the cytoplasm. It carries out the reaction [protein]-peptidylproline (omega=180) = [protein]-peptidylproline (omega=0). Binds cyclosporin A (CsA). CsA mediates some of its effects via an inhibitory action on PPIase. PPIases accelerate the folding of proteins. It catalyzes the cis-trans isomerization of proline imidic peptide bonds in oligopeptides. The chain is Peptidyl-prolyl cis-trans isomerase from Unspecified eudicot DB-1992.